A 127-amino-acid polypeptide reads, in one-letter code: HTH-type transcriptional regulator ImmR (127 aa).

Residues methionine 1–glutamine 12 are compositionally biased toward basic and acidic residues. The disordered stretch occupies residues methionine 1–alanine 22. The HTH cro/C1-type domain occupies leucine 7 to leucine 61. Residues glutamine 18–arginine 37 constitute a DNA-binding region (H-T-H motif).

This is HTH-type transcriptional regulator ImmR (immR) from Bacillus subtilis (strain 168).